The following is a 680-amino-acid chain: Trehalase (680 aa).

The disordered stretch occupies residues 1–27 (MVLHAQPPDQSTETAREAKALAGATDG).

It belongs to the glycosyl hydrolase 15 family. As to quaternary structure, homomultimer. Phosphate serves as cofactor.

The catalysed reaction is alpha,alpha-trehalose + H2O = alpha-D-glucose + beta-D-glucose. It functions in the pathway glycan degradation; trehalose degradation; D-glucose from alpha,alpha-trehalose: step 1/1. Functionally, catalyzes the hydrolysis of alpha,alpha-trehalose into two molecules of D-glucose. In Mycobacterium tuberculosis (strain ATCC 25618 / H37Rv), this protein is Trehalase.